A 460-amino-acid polypeptide reads, in one-letter code: uncharacterized protein (460 aa).

Positions Thr-5–Gln-63 constitute a TRAM domain. Residues Cys-76, Cys-82, Cys-85, and Cys-164 each coordinate [4Fe-4S] cluster. S-adenosyl-L-methionine contacts are provided by Gln-288, Tyr-317, Glu-338, and Asp-383. Catalysis depends on Cys-410, which acts as the Nucleophile.

The protein belongs to the class I-like SAM-binding methyltransferase superfamily. RNA M5U methyltransferase family.

This is an uncharacterized protein from Nostoc sp. (strain PCC 7120 / SAG 25.82 / UTEX 2576).